Here is a 103-residue protein sequence, read N- to C-terminus: MTGRTVTRADLASAVCRKVGLSYTESAALVELILSEISDSLVKGEMVKLSCFATFQVRSKSRRIGRNPKTGIEAPIPPRRVVTFKAANILKQRILDVHCAKQK.

This sequence belongs to the bacterial histone-like protein family. As to quaternary structure, heterodimer of an alpha and a beta chain.

In terms of biological role, this protein is one of the two subunits of integration host factor, a specific DNA-binding protein that functions in genetic recombination as well as in transcriptional and translational control. The polypeptide is Integration host factor subunit alpha (Bartonella bacilliformis (strain ATCC 35685 / KC583 / Herrer 020/F12,63)).